We begin with the raw amino-acid sequence, 262 residues long: Tryptophan synthase alpha chain (262 aa).

Residues E49 and D60 each act as proton acceptor in the active site.

It belongs to the TrpA family. Tetramer of two alpha and two beta chains.

It carries out the reaction (1S,2R)-1-C-(indol-3-yl)glycerol 3-phosphate + L-serine = D-glyceraldehyde 3-phosphate + L-tryptophan + H2O. The protein operates within amino-acid biosynthesis; L-tryptophan biosynthesis; L-tryptophan from chorismate: step 5/5. Its function is as follows. The alpha subunit is responsible for the aldol cleavage of indoleglycerol phosphate to indole and glyceraldehyde 3-phosphate. This Thermoanaerobacter pseudethanolicus (strain ATCC 33223 / 39E) (Clostridium thermohydrosulfuricum) protein is Tryptophan synthase alpha chain.